Reading from the N-terminus, the 370-residue chain is Histidinol-phosphate aminotransferase (370 aa).

Lys231 is subject to N6-(pyridoxal phosphate)lysine.

It belongs to the class-II pyridoxal-phosphate-dependent aminotransferase family. Histidinol-phosphate aminotransferase subfamily. In terms of assembly, homodimer. Pyridoxal 5'-phosphate is required as a cofactor.

It carries out the reaction L-histidinol phosphate + 2-oxoglutarate = 3-(imidazol-4-yl)-2-oxopropyl phosphate + L-glutamate. It participates in amino-acid biosynthesis; L-histidine biosynthesis; L-histidine from 5-phospho-alpha-D-ribose 1-diphosphate: step 7/9. The sequence is that of Histidinol-phosphate aminotransferase from Paracidovorax citrulli (strain AAC00-1) (Acidovorax citrulli).